Reading from the N-terminus, the 116-residue chain is WMMIVEQKCRVIVMLAKCFEAGKKKCQKYWPDSEETKTFGRVKVFNADEVKYCGFLRRRFHIESFDENDVCGRVFQYQYINWPDHSVPNTTSNLVRMHKYVIQCLEEIGGDAPMVV.

Residues 1 to 116 enclose the Tyrosine-protein phosphatase domain; the sequence is WMMIVEQKCR…EIGGDAPMVV (116 aa). D84 contributes to the substrate binding site.

It belongs to the protein-tyrosine phosphatase family.

The catalysed reaction is O-phospho-L-tyrosyl-[protein] + H2O = L-tyrosyl-[protein] + phosphate. In Styela plicata (Wrinkled sea squirt), this protein is Tyrosine-protein phosphatase 20 (STY-20).